A 604-amino-acid polypeptide reads, in one-letter code: Threonine--tRNA ligase (604 aa).

The tract at residues 209 to 500 (DHRKLGQEMG…LTEHFGGEFP (292 aa)) is catalytic. Zn(2+) contacts are provided by cysteine 301, histidine 352, and histidine 477.

Belongs to the class-II aminoacyl-tRNA synthetase family. In terms of assembly, homodimer. Requires Zn(2+) as cofactor.

The protein localises to the cytoplasm. The enzyme catalyses tRNA(Thr) + L-threonine + ATP = L-threonyl-tRNA(Thr) + AMP + diphosphate + H(+). Catalyzes the attachment of threonine to tRNA(Thr) in a two-step reaction: L-threonine is first activated by ATP to form Thr-AMP and then transferred to the acceptor end of tRNA(Thr). Also edits incorrectly charged L-seryl-tRNA(Thr). This Helicobacter hepaticus (strain ATCC 51449 / 3B1) protein is Threonine--tRNA ligase.